Here is a 481-residue protein sequence, read N- to C-terminus: Serine/threonine-protein kinase US3 (481 aa).

The disordered stretch occupies residues 12–63; it reads GQGRRKEEAVPPETKPSRVFPHGPFYTPAEDACLDSPPPETPKPSHTTPPSE. The Protein kinase domain occupies 191 to 478; the sequence is FTIHGALTPG…AAELLCLPLF (288 aa). Residues 197-205 and Lys-220 each bind ATP; that span reads LTPGSEGCV. Asp-305 serves as the catalytic Proton acceptor.

The protein belongs to the protein kinase superfamily. Ser/Thr protein kinase family. Interacts with host LAT; this interaction prevents LAT activation of TRAF6. Phosphorylated by UL13; this phosphorylation regulates subsequent phosphorylation of UL31 and UL34 by US3. Autophosphorylated.

It is found in the host cytoplasm. The protein resides in the host nucleus. It carries out the reaction L-seryl-[protein] + ATP = O-phospho-L-seryl-[protein] + ADP + H(+). The catalysed reaction is L-threonyl-[protein] + ATP = O-phospho-L-threonyl-[protein] + ADP + H(+). Its function is as follows. Multifunctional serine/threonine kinase that plays a role in several processes including egress of virus particles from the nucleus, modulation of the actin cytoskeleton and inhibition of host immune response. Phosphorylates UL31 and UL34, two critical regulators of capsid budding from nucleus to endoplasmic reticulum, thereby facilitating virion egress. Modulates and redistributes host components of the nuclear envelope, including LMNA, emerin/EMD and the nuclear matrix protein MATR3. In turn, facilitates nuclear pore impairment and capsid release through impaired nuclear envelope. Phosphorylates envelope glycoprotein B (gB), probably to direct it to the cell surface. Promotes virus intracellular spread by restructuring host cell cytoskeleton. Blocks host apoptosis to extend cell survival and allow efficient viral replication. Promotes viral gene expression by phosphorylating host HDAC2 to reduce viral genome silencing. Strongly inhibits TCR-activated signal transduction in T-cells by reducing the ubiquitination of LAT and TRAF6, leading to a suboptimal activation of LAT. Subverts host antiviral innate immunity by inhibiting type I interferon production through hyperphosphorylation of beta-catenin/CTNNB1. In addition, phosphorylates the RNA sensor RIGI and the transcription factor IRF3 to prevent the RLR-mediated antiviral signaling pathway. Hyperphosphorylates host RELA and thereby dampens NF-kappa-B signaling. Acts as an immunoevasin partly responsible for inhibition of MR1 expression and antigen presentation in response to bacterial infection. The chain is Serine/threonine-protein kinase US3 (US3) from Human herpesvirus 1 (strain 17) (HHV-1).